The primary structure comprises 360 residues: Peptide chain release factor 1 (360 aa).

Glutamine 235 carries the N5-methylglutamine modification. The segment at 285-305 (KRQEAEASERRNLLGSGDRSD) is disordered.

Belongs to the prokaryotic/mitochondrial release factor family. In terms of processing, methylated by PrmC. Methylation increases the termination efficiency of RF1.

Its subcellular location is the cytoplasm. Functionally, peptide chain release factor 1 directs the termination of translation in response to the peptide chain termination codons UAG and UAA. The polypeptide is Peptide chain release factor 1 (Proteus mirabilis (strain HI4320)).